We begin with the raw amino-acid sequence, 346 residues long: Cell division protein ZipA (346 aa).

At Met-1–Leu-6 the chain is on the periplasmic side. The chain crosses the membrane as a helical span at residues Val-7–Ile-27. The Cytoplasmic portion of the chain corresponds to Arg-28 to Ala-346. 2 disordered regions span residues Ala-76–Glu-103 and Gln-121–Pro-145.

It belongs to the ZipA family. Interacts with FtsZ via their C-terminal domains.

The protein localises to the cell inner membrane. Its function is as follows. Essential cell division protein that stabilizes the FtsZ protofilaments by cross-linking them and that serves as a cytoplasmic membrane anchor for the Z ring. Also required for the recruitment to the septal ring of downstream cell division proteins. The protein is Cell division protein ZipA of Shewanella sp. (strain MR-4).